Consider the following 443-residue polypeptide: UDP-N-acetylglucosamine 1-carboxyvinyltransferase 1 (443 aa).

22-23 (KN) contacts phosphoenolpyruvate. Residue Arg95 participates in UDP-N-acetyl-alpha-D-glucosamine binding. The active-site Proton donor is the Cys119. The residue at position 119 (Cys119) is a 2-(S-cysteinyl)pyruvic acid O-phosphothioketal. UDP-N-acetyl-alpha-D-glucosamine-binding positions include 124–128 (RPIDL), Asp308, and Val330.

This sequence belongs to the EPSP synthase family. MurA subfamily.

Its subcellular location is the cytoplasm. It catalyses the reaction phosphoenolpyruvate + UDP-N-acetyl-alpha-D-glucosamine = UDP-N-acetyl-3-O-(1-carboxyvinyl)-alpha-D-glucosamine + phosphate. The protein operates within cell wall biogenesis; peptidoglycan biosynthesis. Its function is as follows. Cell wall formation. Adds enolpyruvyl to UDP-N-acetylglucosamine. The protein is UDP-N-acetylglucosamine 1-carboxyvinyltransferase 1 of Oceanobacillus iheyensis (strain DSM 14371 / CIP 107618 / JCM 11309 / KCTC 3954 / HTE831).